Here is a 963-residue protein sequence, read N- to C-terminus: IQ motif and SEC7 domain-containing protein 1 (963 aa).

Residues 21–88 form a disordered region; sequence SGVEGEAPSS…TRRPKLQHST (68 aa). Polar residues predominate over residues 29–38; sequence SSETGTSLDS. Phosphoserine occurs at positions 89, 105, and 107. One can recognise an IQ domain in the interval 134–163; that stretch reads TRHAARTIQTAFRQYQMNKNFERLRSSMSE. Phosphoserine occurs at positions 180, 249, and 253. Disordered stretches follow at residues 312–332 and 349–513; these read LSPP…ESDL and KEDK…RNSW. Basic and acidic residues-rich tracts occupy residues 366-376 and 430-446; these read ERQEQRLRVEH and LPRE…RPLD. The segment covering 471 to 489 has biased composition (low complexity); the sequence is DSINSTSNSNDTINCSSES. Phosphoserine is present on residues serine 512 and serine 515. An SEC7 domain is found at 517–710; that stretch reads AFSNDVIRKR…MGIYERIRKR (194 aa). The PH domain maps to 774–866; that stretch reads HQREIFLFND…LRESIAEVQE (93 aa). Residues 848 to 879 are a coiled coil; it reads QDRKKFTDDLRESIAEVQEMEKHRIESELEKQ. Serine 892 bears the Phosphoserine mark. A Phosphotyrosine modification is found at tyrosine 911. The interval 922–947 is disordered; the sequence is LSSSLRDLSEAGKRGRRSSAGSLESN. Phosphoserine occurs at positions 924 and 925.

The protein belongs to the BRAG family. Interacts with ARF1 and ARF6. Interacts with GRIA2; the interaction is required for ARF6 activation. As to expression, expressed in brain, ovary, heart, lung, liver, kidney and leukocytes. Moderate expression was also detected in lung, skeletal muscle, placenta, small intestine, pancreas, spleen and testis.

It is found in the cytoplasm. It localises to the nucleus. Its subcellular location is the postsynaptic density. The protein localises to the cytoplasmic vesicle. The protein resides in the secretory vesicle. It is found in the synaptic vesicle. Its function is as follows. Guanine nucleotide exchange factor for ARF1 and ARF6. Guanine nucleotide exchange factor activity is enhanced by lipid binding. Accelerates GTP binding by ARFs of all three classes. Guanine nucleotide exchange protein for ARF6, mediating internalization of beta-1 integrin. Involved in neuronal development. In neurons, plays a role in the control of vesicle formation by endocytoc cargo. Upon long term depression, interacts with GRIA2 and mediates the activation of ARF6 to internalize synaptic AMPAR receptors. The polypeptide is IQ motif and SEC7 domain-containing protein 1 (Homo sapiens (Human)).